We begin with the raw amino-acid sequence, 110 residues long: uncharacterized protein (110 aa).

Over residues 1–20 (MNQQNQKISNPQTPVPTTSE) the composition is skewed to polar residues. Residues 1-24 (MNQQNQKISNPQTPVPTTSEMNDR) are disordered.

This is an uncharacterized protein from Bacillus subtilis (strain 168).